We begin with the raw amino-acid sequence, 104 residues long: L-rhamnose mutarotase (104 aa).

Position 18 (tyrosine 18) interacts with substrate. Histidine 22 (proton donor) is an active-site residue. Residues tyrosine 41 and 76 to 77 (WW) each bind substrate.

It belongs to the rhamnose mutarotase family. As to quaternary structure, homodimer.

It localises to the cytoplasm. It carries out the reaction alpha-L-rhamnose = beta-L-rhamnose. The protein operates within carbohydrate metabolism; L-rhamnose metabolism. Functionally, involved in the anomeric conversion of L-rhamnose. In Klebsiella pneumoniae (strain 342), this protein is L-rhamnose mutarotase.